The sequence spans 76 residues: Large ribosomal subunit protein eL20 (76 aa).

Belongs to the eukaryotic ribosomal protein eL20 family. In terms of assembly, part of the 50S ribosomal subunit. Binds 23S rRNA.

The chain is Large ribosomal subunit protein eL20 from Methanococcus maripaludis (strain DSM 14266 / JCM 13030 / NBRC 101832 / S2 / LL).